Consider the following 146-residue polypeptide: Transcription initiation factor TFIID subunit 10b (146 aa).

The interval 16 to 43 is disordered; the sequence is GASSHGQSSGGGGGGDRDRTTPSSHLSD.

It belongs to the TAF10 family. In terms of assembly, belongs to the TFIID complex which is composed of TATA binding protein (Tbp) and a number of TBP-associated factors (TAFs). The N-terminus interacts with the histone fold of Taf8. As to expression, at embryonic stage 9, expression is seen in the mesodermal layer and midgut primordia. The mesoderm-specific expression persists in later stages of development and at its highest level is detected in midgut, hindgut, and differentiating somatic muscle fibers. Coexpressed with Taf10 in the lateral epidermis and anal plate.

It is found in the cytoplasm. The protein localises to the nucleus. In terms of biological role, TFIID is a multimeric protein complex that plays a central role in mediating promoter responses to various activators and repressors. The polypeptide is Transcription initiation factor TFIID subunit 10b (Drosophila melanogaster (Fruit fly)).